Here is a 98-residue protein sequence, read N- to C-terminus: Co-chaperonin GroES (98 aa).

It belongs to the GroES chaperonin family. Heptamer of 7 subunits arranged in a ring. Interacts with the chaperonin GroEL.

The protein resides in the cytoplasm. Its function is as follows. Together with the chaperonin GroEL, plays an essential role in assisting protein folding. The GroEL-GroES system forms a nano-cage that allows encapsulation of the non-native substrate proteins and provides a physical environment optimized to promote and accelerate protein folding. GroES binds to the apical surface of the GroEL ring, thereby capping the opening of the GroEL channel. This chain is Co-chaperonin GroES, found in Renibacterium salmoninarum (strain ATCC 33209 / DSM 20767 / JCM 11484 / NBRC 15589 / NCIMB 2235).